We begin with the raw amino-acid sequence, 295 residues long: Protein U26 (295 aa).

The next 8 helical transmembrane spans lie at 4–24 (LTDSFILGLAKGAVIPGLYTF), 31–51 (SPLGQIGVLITVAISFLLTFK), 66–86 (IVFLSLMAPKLPSLLSAVVMI), 103–123 (VMIMPSYSPAVFTGIMVSLFF), 183–203 (FTVEFLLLFTMLWIGKMFLSM), 218–238 (VFFKLNVFKAAACAVVAILSG), 243–263 (VCLYRIIFEAFVGLGFSSIML), and 274–294 (FYAGDLLNGFFCLVVCCMYFG).

It localises to the membrane. This Human herpesvirus 6A (strain Uganda-1102) (HHV-6 variant A) protein is Protein U26 (U26).